The following is a 157-amino-acid chain: Probable succinate transporter subunit YjjB (157 aa).

4 consecutive transmembrane segments (helical) span residues 6–26 (IILT…GFAM), 51–71 (VLMI…ILVG), 87–107 (VFTV…VAMI), and 129–149 (FLKA…PGLW).

This sequence belongs to the ThrE exporter (TC 2.A.79) family. In terms of assembly, the transporter is composed of YjjB and YjjP.

Its subcellular location is the cell inner membrane. In terms of biological role, involved in succinate export with YjjP. Both proteins are required for export. The polypeptide is Probable succinate transporter subunit YjjB (Proteus mirabilis (strain HI4320)).